Consider the following 248-residue polypeptide: ATP synthase subunit a, chloroplastic (248 aa).

5 consecutive transmembrane segments (helical) span residues 37–57 (AQVL…AILA), 96–116 (VPFI…GALL), 134–154 (DINT…YAGL), 200–220 (LVVA…MMFL), and 221–241 (GLFT…AYIG).

Belongs to the ATPase A chain family. In terms of assembly, F-type ATPases have 2 components, CF(1) - the catalytic core - and CF(0) - the membrane proton channel. CF(1) has five subunits: alpha(3), beta(3), gamma(1), delta(1), epsilon(1). CF(0) has four main subunits: a, b, b' and c.

It localises to the plastid. It is found in the chloroplast thylakoid membrane. Functionally, key component of the proton channel; it plays a direct role in the translocation of protons across the membrane. This is ATP synthase subunit a, chloroplastic from Anthoceros angustus (Hornwort).